We begin with the raw amino-acid sequence, 151 residues long: tRNA-specific adenosine deaminase (151 aa).

The region spanning 1–111 (MGKEYFLKVA…LDKKHGGVVS (111 aa)) is the CMP/dCMP-type deaminase domain. His52 lines the Zn(2+) pocket. Glu54 functions as the Proton donor in the catalytic mechanism. Positions 82 and 85 each coordinate Zn(2+).

The protein belongs to the cytidine and deoxycytidylate deaminase family. As to quaternary structure, homodimer. The cofactor is Zn(2+).

The catalysed reaction is adenosine(34) in tRNA + H2O + H(+) = inosine(34) in tRNA + NH4(+). Its function is as follows. Catalyzes the deamination of adenosine to inosine at the wobble position 34 of tRNA(Arg2). The chain is tRNA-specific adenosine deaminase from Aquifex aeolicus (strain VF5).